The primary structure comprises 360 residues: UDP-N-acetylglucosamine--N-acetylmuramyl-(pentapeptide) pyrophosphoryl-undecaprenol N-acetylglucosamine transferase (360 aa).

Residues 14-16 (TGG), Asn131, Arg167, Ser195, Ile249, and Gln294 each bind UDP-N-acetyl-alpha-D-glucosamine.

This sequence belongs to the glycosyltransferase 28 family. MurG subfamily.

The protein resides in the cell inner membrane. The enzyme catalyses di-trans,octa-cis-undecaprenyl diphospho-N-acetyl-alpha-D-muramoyl-L-alanyl-D-glutamyl-meso-2,6-diaminopimeloyl-D-alanyl-D-alanine + UDP-N-acetyl-alpha-D-glucosamine = di-trans,octa-cis-undecaprenyl diphospho-[N-acetyl-alpha-D-glucosaminyl-(1-&gt;4)]-N-acetyl-alpha-D-muramoyl-L-alanyl-D-glutamyl-meso-2,6-diaminopimeloyl-D-alanyl-D-alanine + UDP + H(+). It participates in cell wall biogenesis; peptidoglycan biosynthesis. Its function is as follows. Cell wall formation. Catalyzes the transfer of a GlcNAc subunit on undecaprenyl-pyrophosphoryl-MurNAc-pentapeptide (lipid intermediate I) to form undecaprenyl-pyrophosphoryl-MurNAc-(pentapeptide)GlcNAc (lipid intermediate II). This is UDP-N-acetylglucosamine--N-acetylmuramyl-(pentapeptide) pyrophosphoryl-undecaprenol N-acetylglucosamine transferase from Polaromonas naphthalenivorans (strain CJ2).